A 558-amino-acid chain; its full sequence is Receptor-like kinase LIP2 (558 aa).

The disordered stretch occupies residues 1–45 (MHCFPCFSSPKNKKSSTTNETNDNNEPKPDDRRRAEETEEIEQSE). Over residues 15-24 (SSTTNETNDN) the composition is skewed to low complexity. Residues 25 to 36 (NEPKPDDRRRAE) are compositionally biased toward basic and acidic residues. T53 carries the post-translational modification Phosphothreonine. The Protein kinase domain maps to 64-343 (FRQECLLGEG…SDVMVALSFL (280 aa)). Residues 70–78 (LGEGGFGRV) and K93 each bind ATP. Phosphotyrosine is present on Y138. D191 functions as the Proton acceptor in the catalytic mechanism. Phosphoserine is present on residues S195 and S227. A Phosphothreonine modification is found at T233. Y241 is modified (phosphotyrosine). The tract at residues 372 to 558 (HDSNLVSPPP…SDVAIDSIKE (187 aa)) is disordered. Residues 401 to 418 (ESEKESVSKNEYKKKHEE) show a composition bias toward basic and acidic residues. The segment covering 419–431 (EDSSMESDDESDS) has biased composition (acidic residues). The span at 432–448 (NSEHEKDQPPKPIDEKN) shows a compositional bias: basic and acidic residues. Over residues 473–486 (SKSSQKSNDESTSS) the composition is skewed to low complexity. Composition is skewed to basic and acidic residues over residues 488–500 (YDSD…KGKE), 508–524 (EEKH…KTDD), and 547–558 (IKSDVAIDSIKE).

The protein belongs to the protein kinase superfamily. Ser/Thr protein kinase family. As to quaternary structure, interacts with PRK6. In terms of processing, palmitoylated. Expressed in mature pollen and in germinating pollen tubes.

Its subcellular location is the cell membrane. Functionally, involved in pollen tube guidance into micropyle. Participates in perception of the ovule-secreted peptide signal LURE1. The chain is Receptor-like kinase LIP2 from Arabidopsis thaliana (Mouse-ear cress).